A 269-amino-acid polypeptide reads, in one-letter code: 2' cyclic ADP-D-ribose synthase AbTIR (269 aa).

Residues 31 to 99 adopt a coiled-coil conformation; it reads LKTKLSEISR…KQQKDEIEHQ (69 aa). Residues 133 to 266 enclose the TIR domain; the sequence is PEYDLFISHA…EIAHQLADVI (134 aa). Residues Ser-143, Lys-172, and Lys-202 each contribute to the NAD(+) site. The active site involves Glu-208. Lys-245 is a binding site for NAD(+).

As to quaternary structure, homodimer. In the presence of NAD(+) analog 8-amino-isoquinoline adenine dinucleotide (3AD) forms filaments with 3AD between monomers; conformational changes occur upon 3AD binding.

It carries out the reaction NAD(+) = 2'cADPR + nicotinamide + H(+). The enzyme catalyses NAD(+) + H2O = ADP-D-ribose + nicotinamide + H(+). The catalysed reaction is NADP(+) + H2O = ADP-D-ribose 2'-phosphate + nicotinamide + H(+). In terms of biological role, NAD(+) hydrolase (NADase) that catalyzes cleavage of NAD(+) into ADP-D-ribose (ADPR) and nicotinamide. In addition to ADPR, also generates a cyclization variant of cyclic ADPR (cADPR), termed 2'cADPR (v-cADPR). Cleaves NADP(+), but does not cyclize the product. This chain is 2' cyclic ADP-D-ribose synthase AbTIR, found in Acinetobacter baumannii (strain 1295743).